Reading from the N-terminus, the 678-residue chain is Chloride channel protein ClC-Kb (678 aa).

At M1 to W50 the chain is on the cytoplasmic side. Helical transmembrane passes span Y51–Y82 and L91–S111. Positions P116–K127 form an intramembrane region, helical. S121 contacts chloride. The next 2 membrane-spanning stretches (helical) occupy residues I141–T160 and L161–L180. Residues A203–I224 constitute an intramembrane region (helical). Residues Y236 to V255 form a helical membrane-spanning segment. The Ca(2+) site is built by E259, E261, D278, and E281. The next 2 membrane-spanning stretches (helical) occupy residues I282–T310 and P325–P342. The helical intramembrane region spans A349 to T360. N-linked (GlcNAc...) asparagine glycosylation occurs at N364. 2 consecutive transmembrane segments (helical) span residues G400–P420 and M421–L440. F426 provides a ligand contact to chloride. Positions G464–V496 form an intramembrane region, helical. Residues P500 to Y520 traverse the membrane as a helical segment. Over D521 to F678 the chain is Cytoplasmic. 2 consecutive CBS domains span residues M551–S612 and D620–F678.

The protein belongs to the chloride channel (TC 2.A.49) family. CLCNKB subfamily. As to quaternary structure, homodimer. Interacts with BSND. Post-translationally, N-glycosylated. As to expression, expressed predominantly in the kidney.

The protein resides in the basolateral cell membrane. It carries out the reaction chloride(in) = chloride(out). It catalyses the reaction iodide(out) = iodide(in). The enzyme catalyses nitrate(in) = nitrate(out). The catalysed reaction is bromide(in) = bromide(out). In terms of biological role, anion-selective channel permeable to small monovalent anions with ion selectivity for chloride &gt; bromide &gt; nitrate &gt; iodide. Forms a homodimeric channel where each subunit has its own ion conduction pathway. May conduct double-barreled currents controlled by two types of gates, two fast gates that control each subunit independently and a slow common gate that opens and shuts off both subunits simultaneously. Assembles with the regulatory subunit BSND/Barttin for sorting at the basolateral plasma membrane domain and functional switch to the ion conducting state. CLCNKB:BSND channels display mostly a linear current-voltage relationship controlled by common gate. Mediates chloride conductance along nephron segments, namely the thick ascending limb of Henle's loop, convoluted tubule and the collecting duct, contributing to the maintenance of systemic acid-base and electrolyte homeostasis. Conducts chloride currents in the stria vascularis of the inner ear to establish the endocochlear potential necessary for normal hearing. This chain is Chloride channel protein ClC-Kb (CLCNKB), found in Oryctolagus cuniculus (Rabbit).